A 521-amino-acid chain; its full sequence is Zinc finger CCCH domain-containing protein 45 (521 aa).

3 disordered regions span residues 28–60 (TEDS…GFEG), 142–185 (TPAI…PLCS), and 296–319 (SRSF…ISPP). The segment covering 34-43 (NVASQPQRHS) has biased composition (polar residues). Over residues 159–168 (EESSNSKVES) the composition is skewed to low complexity. Positions 170-185 (VTANKQGQLETKPLCS) are enriched in polar residues. A C3H1-type zinc finger spans residues 469-497 (NKIHQQCIYFGTANGCNMGDSCTYVHDRY).

This Arabidopsis thaliana (Mouse-ear cress) protein is Zinc finger CCCH domain-containing protein 45.